We begin with the raw amino-acid sequence, 231 residues long: LexA repressor (231 aa).

Positions 26–46 (FDEMKDALDLRSKSGIHRLIT) form a DNA-binding region, H-T-H motif. Active-site for autocatalytic cleavage activity residues include Ser-152 and Lys-190.

It belongs to the peptidase S24 family. In terms of assembly, homodimer.

The enzyme catalyses Hydrolysis of Ala-|-Gly bond in repressor LexA.. Represses a number of genes involved in the response to DNA damage (SOS response), including recA and lexA. In the presence of single-stranded DNA, RecA interacts with LexA causing an autocatalytic cleavage which disrupts the DNA-binding part of LexA, leading to derepression of the SOS regulon and eventually DNA repair. The chain is LexA repressor from Bradyrhizobium diazoefficiens (strain JCM 10833 / BCRC 13528 / IAM 13628 / NBRC 14792 / USDA 110).